The sequence spans 373 residues: Glutamine synthetase (373 aa).

Position 2 is an N-acetylalanine (alanine 2). Residues 2–25 form a required for glutamine-induced ubiquitination by CRL4(CRBN) and proteasomal degradation region; that stretch reads ATSASSHLNKGIKQMYMSLPQGEK. 2 positions are modified to N6-acetyllysine: lysine 11 and lysine 14. The GS beta-grasp domain maps to 24-106; sequence EKVQAMYIWV…VLCEVFKYNR (83 aa). Residue tyrosine 104 is modified to Phosphotyrosine. Residues 113 to 373 form the GS catalytic domain; sequence LRHICKRIMD…TGDEPFQYKN (261 aa). Glutamate 134 contributes to the ATP binding site. Residues glutamate 134, glutamate 136, glutamate 196, and glutamate 203 each coordinate Mn(2+). 203–208 contacts ATP; that stretch reads EFQIGP. Residue 246–247 participates in L-glutamate binding; the sequence is NW. Residue histidine 253 participates in Mn(2+) binding. ATP-binding positions include 255–257, arginine 319, and arginine 324; that span reads NFS. L-glutamate is bound at residue arginine 319. 336–338 lines the ADP pocket; that stretch reads YFE. Glutamate 338 lines the Mn(2+) pocket. An L-glutamate-binding site is contributed by arginine 340. Serine 343 bears the Phosphoserine mark.

It belongs to the glutamine synthetase family. As to quaternary structure, decamer; composed of two pentamers. Interacts with PALMD. Interacts with RHOJ. Interacts with BEST2; this interaction tethers a fraction of GLUL to the membrane, causing a decrease of cytosolic glutamine synthase (GS) activity and inhibits the chloride channel activity of BEST2 by affecting the gating at the aperture in the absence of intracellular glutamate. Mg(2+) is required as a cofactor. It depends on Mn(2+) as a cofactor. Post-translationally, acetylated by EP300/p300; acetylation is stimulated by increased glutamine levels and promotes ubiquitin-mediated proteasomal degradation. Palmitoylated; undergoes autopalmitoylation. In terms of processing, ubiquitinated by ZNRF1. Ubiquitinated by the DCX (DDB1-CUL4-X-box) E3 ubiquitin-protein ligase complex called CRL4(CRBN), leading to proteasomal degradation. As to expression, expressed in microvascular endothelial cells.

The protein resides in the cytoplasm. It is found in the cytosol. The protein localises to the microsome. It localises to the mitochondrion. Its subcellular location is the cell membrane. The enzyme catalyses L-glutamate + NH4(+) + ATP = L-glutamine + ADP + phosphate + H(+). It catalyses the reaction L-cysteinyl-[protein] + hexadecanoyl-CoA = S-hexadecanoyl-L-cysteinyl-[protein] + CoA. Its activity is regulated as follows. Glutamine synthetase activity is inhibited by methionine sulfoximine (MSO). In terms of biological role, glutamine synthetase that catalyzes the ATP-dependent conversion of glutamate and ammonia to glutamine. Its role depends on tissue localization: in the brain, it regulates the levels of toxic ammonia and converts neurotoxic glutamate to harmless glutamine, whereas in the liver, it is one of the enzymes responsible for the removal of ammonia. Plays a key role in ammonium detoxification during erythropoiesis: the glutamine synthetase activity is required to remove ammonium generated by porphobilinogen deaminase (HMBS) during heme biosynthesis to prevent ammonium accumulation and oxidative stress. Essential for proliferation of fetal skin fibroblasts. Independently of its glutamine synthetase activity, required for endothelial cell migration during vascular development. Involved in angiogenesis by regulating membrane localization and activation of the GTPase RHOJ, possibly by promoting RHOJ palmitoylation. May act as a palmitoyltransferase for RHOJ: able to autopalmitoylate and then transfer the palmitoyl group to RHOJ. Plays a role in ribosomal 40S subunit biogenesis. Through the interaction with BEST2, inhibits BEST2 channel activity by affecting the gating at the aperture in the absence of intracellular L-glutamate, but sensitizes BEST2 to intracellular L-glutamate, which promotes the opening of BEST2 and thus relieves its inhibitory effect on BEST2. In Mus musculus (Mouse), this protein is Glutamine synthetase.